We begin with the raw amino-acid sequence, 259 residues long: Ribosomal RNA small subunit methyltransferase J (259 aa).

S-adenosyl-L-methionine contacts are provided by residues 101 to 102 (RD), 117 to 118 (ER), 153 to 154 (SS), and Asp-176.

It belongs to the methyltransferase superfamily. RsmJ family.

It is found in the cytoplasm. It carries out the reaction guanosine(1516) in 16S rRNA + S-adenosyl-L-methionine = N(2)-methylguanosine(1516) in 16S rRNA + S-adenosyl-L-homocysteine + H(+). Specifically methylates the guanosine in position 1516 of 16S rRNA. This chain is Ribosomal RNA small subunit methyltransferase J, found in Vibrio campbellii (strain ATCC BAA-1116).